Here is a 415-residue protein sequence, read N- to C-terminus: Diaminopimelate decarboxylase (415 aa).

At K60 the chain carries N6-(pyridoxal phosphate)lysine. Residues G239 and 273–276 (EPGR) contribute to the pyridoxal 5'-phosphate site. R276, R312, and Y316 together coordinate substrate. C342 functions as the Proton donor in the catalytic mechanism. 2 residues coordinate substrate: E343 and Y370. Pyridoxal 5'-phosphate is bound at residue Y370.

It belongs to the Orn/Lys/Arg decarboxylase class-II family. LysA subfamily. As to quaternary structure, homodimer. Pyridoxal 5'-phosphate serves as cofactor.

It catalyses the reaction meso-2,6-diaminopimelate + H(+) = L-lysine + CO2. It functions in the pathway amino-acid biosynthesis; L-lysine biosynthesis via DAP pathway; L-lysine from DL-2,6-diaminopimelate: step 1/1. In terms of biological role, specifically catalyzes the decarboxylation of meso-diaminopimelate (meso-DAP) to L-lysine. This is Diaminopimelate decarboxylase from Pseudomonas aeruginosa (strain ATCC 15692 / DSM 22644 / CIP 104116 / JCM 14847 / LMG 12228 / 1C / PRS 101 / PAO1).